Here is a 194-residue protein sequence, read N- to C-terminus: WASH complex subunit 3 (194 aa).

M1 is subject to N-acetylmethionine. Residues 46 to 74 adopt a coiled-coil conformation; that stretch reads TVCEEKLADLSLRIQQIETTLNILDAKLS. Positions 98 to 123 are enriched in polar residues; that stretch reads THSEATSEQSQQNSLQDSGPQESEVT. Disordered regions lie at residues 98 to 125 and 158 to 194; these read THSEATSEQSQQNSLQDSGPQESEVTPE and SEGLDPDLLERPDAPVPDGEGEKNTEESSDSESSFSD.

Belongs to the CCDC53 family. As to quaternary structure, component of the WASH core complex also described as WASH regulatory complex (SHRC) composed of WASHC1, WASHC2, WASHC3, WASHC4 and WASHC5. The WASH core complex associates via WASHC2 with the F-actin-capping protein dimer (formed by CAPZA1, CAPZA2 or CAPZA3 and CAPZB) in a transient or substoichiometric manner which was initially described as WASH complex.

Its subcellular location is the early endosome. Acts as a component of the WASH core complex that functions as a nucleation-promoting factor (NPF) at the surface of endosomes, where it recruits and activates the Arp2/3 complex to induce actin polymerization, playing a key role in the fission of tubules that serve as transport intermediates during endosome sorting. The polypeptide is WASH complex subunit 3 (Bos taurus (Bovine)).